A 93-amino-acid chain; its full sequence is Small ribosomal subunit protein uS19 (93 aa).

This sequence belongs to the universal ribosomal protein uS19 family.

Protein S19 forms a complex with S13 that binds strongly to the 16S ribosomal RNA. The polypeptide is Small ribosomal subunit protein uS19 (Limosilactobacillus fermentum (strain NBRC 3956 / LMG 18251) (Lactobacillus fermentum)).